A 172-amino-acid polypeptide reads, in one-letter code: Peptide methionine sulfoxide reductase MsrA (172 aa).

The active site involves Cys12.

It belongs to the MsrA Met sulfoxide reductase family.

It carries out the reaction L-methionyl-[protein] + [thioredoxin]-disulfide + H2O = L-methionyl-(S)-S-oxide-[protein] + [thioredoxin]-dithiol. The catalysed reaction is [thioredoxin]-disulfide + L-methionine + H2O = L-methionine (S)-S-oxide + [thioredoxin]-dithiol. Its function is as follows. Has an important function as a repair enzyme for proteins that have been inactivated by oxidation. Catalyzes the reversible oxidation-reduction of methionine sulfoxide in proteins to methionine. This chain is Peptide methionine sulfoxide reductase MsrA, found in Ligilactobacillus salivarius (strain UCC118) (Lactobacillus salivarius).